Reading from the N-terminus, the 511-residue chain is Maturase K (511 aa).

The protein belongs to the intron maturase 2 family. MatK subfamily.

The protein resides in the plastid. The protein localises to the chloroplast. Functionally, usually encoded in the trnK tRNA gene intron. Probably assists in splicing its own and other chloroplast group II introns. This is Maturase K from Melica altissima (Siberian melic grass).